The chain runs to 354 residues: Probable tartrate dehydrogenase/decarboxylase (354 aa).

Mn(2+) contacts are provided by Asp-221, Asp-245, and Asp-249.

The protein belongs to the isocitrate and isopropylmalate dehydrogenases family. Requires Mg(2+) as cofactor. Mn(2+) serves as cofactor. It depends on K(+) as a cofactor.

It carries out the reaction tartrate + NAD(+) = 2-hydroxy-3-oxosuccinate + NADH + H(+). The catalysed reaction is (2R,3S)-tartrate + NAD(+) = 2-hydroxy-3-oxosuccinate + NADH + H(+). It catalyses the reaction (2R,3R)-tartrate + NAD(+) = 2-hydroxy-3-oxosuccinate + NADH + H(+). The enzyme catalyses (2R,3R)-tartrate + H(+) = (R)-glycerate + CO2. It carries out the reaction (R)-malate + NAD(+) = pyruvate + CO2 + NADH. Has multiple catalytic activities. Apart from catalyzing the oxidation of (+)-tartrate to oxaloglycolate, also converts meso-tartrate to D-glycerate and catalyzes the oxidative decarboxylation of D-malate to pyruvate. In Bacillus subtilis (strain 168), this protein is Probable tartrate dehydrogenase/decarboxylase (ycsA).